A 113-amino-acid chain; its full sequence is Hydrogenase maturation factor HypA (113 aa).

His-2 serves as a coordination point for Ni(2+). The Zn(2+) site is built by Cys-73, Cys-76, Cys-89, and Cys-92.

The protein belongs to the HypA/HybF family.

Functionally, involved in the maturation of [NiFe] hydrogenases. Required for nickel insertion into the metal center of the hydrogenase. The chain is Hydrogenase maturation factor HypA from Rhodopseudomonas palustris (strain BisB5).